The following is a 528-amino-acid chain: Atypical kinase COQ8B, mitochondrial (528 aa).

The helical transmembrane segment at 93–109 (LASFGGLAVGLGLGALA) threads the bilayer. The KxGQ motif signature appears at 151-154 (KIGQ). The Protein kinase domain occupies 187–419 (MMKVLEEELG…DRVLQKSQDL (233 aa)). The AAAS motif signature appears at 212-215 (AAAS). ATP contacts are provided by residues Ser215, Lys233, and 320 to 323 (MELA). The Proton acceptor role is filled by Asp363. Asn368 and Asp382 together coordinate ATP.

This sequence belongs to the protein kinase superfamily. ADCK protein kinase family. As to quaternary structure, homodimer; homodimerizes via its transmembrane region. Interacts with COQ6 and COQ7. Interacts with the multi-subunit COQ enzyme complex, composed of at least COQ3, COQ4, COQ5, COQ6, COQ7 and COQ9. As to expression, in the kidney, expressed in glomeruli, predominantly in podocyte foot precesses, as well as in proximal tubules and collecting ducts (at protein level).

Its subcellular location is the mitochondrion membrane. The protein localises to the cytoplasm. It is found in the cytosol. The protein resides in the cell membrane. It participates in cofactor biosynthesis; ubiquinone biosynthesis. Atypical kinase involved in the biosynthesis of coenzyme Q, also named ubiquinone, an essential lipid-soluble electron transporter for aerobic cellular respiration. Its substrate specificity is still unclear: may act as a protein kinase that mediates phosphorylation of COQ3. According to other reports, acts as a small molecule kinase, possibly a lipid kinase that phosphorylates a prenyl lipid in the ubiquinone biosynthesis pathway, as suggested by its ability to bind coenzyme Q lipid intermediates. However, the small molecule kinase activity was not confirmed by another publication. Required for podocyte migration. The sequence is that of Atypical kinase COQ8B, mitochondrial from Rattus norvegicus (Rat).